A 138-amino-acid chain; its full sequence is Superoxide dismutase [Mn] (138 aa).

Gln-1, His-49, Asp-133, and His-137 together coordinate Mn(2+).

It belongs to the iron/manganese superoxide dismutase family. It depends on Mn(2+) as a cofactor.

It catalyses the reaction 2 superoxide + 2 H(+) = H2O2 + O2. Destroys superoxide anion radicals which are normally produced within the cells and which are toxic to biological systems. In Mycobacteroides chelonae (Mycobacterium chelonae), this protein is Superoxide dismutase [Mn] (sodA).